We begin with the raw amino-acid sequence, 312 residues long: MKVAVLGAAGGIGQALALLLKTQLPSGSELSLYDIAPVTPGVAVDLSHIPTAVKIKGFSGEDATPALEGADVVLISAGVARKPGMDRSDLFNVNAGIVKNLVQQVAKTCPKACIGIITNPVNTTVAIAAEVLKKAGVYDKNKLFGVTTLDIIRSNTFVAELKGKQPGEVEVPVIGGHSGVTILPLLSQVPGVSFTEQEVADLTKRIQNAGTEVVEAKAGGGSATLSMGQAAARFGLSLVRALQGEQGVVECAYVEGDGQYARFFSQPLLLGKNGVEERKSIGTLSAFEQNALEGMLDTLKKDIALGEEFVNK.

Residues 7 to 13 and Asp-34 contribute to the NAD(+) site; that span reads GAAGGIG. Residues Arg-81 and Arg-87 each contribute to the substrate site. NAD(+) contacts are provided by residues Asn-94 and 117 to 119; that span reads ITN. Asn-119 and Arg-153 together coordinate substrate. His-177 acts as the Proton acceptor in catalysis. Residue Met-227 participates in NAD(+) binding.

Belongs to the LDH/MDH superfamily. MDH type 1 family. Homodimer.

It carries out the reaction (S)-malate + NAD(+) = oxaloacetate + NADH + H(+). Catalyzes the reversible oxidation of malate to oxaloacetate. The polypeptide is Malate dehydrogenase (Escherichia coli O139:H28 (strain E24377A / ETEC)).